A 172-amino-acid chain; its full sequence is Stellate protein CG33237 (172 aa).

The protein belongs to the casein kinase 2 subunit beta family. Interacts in vitro with the casein kinase 2 alpha subunit (CkII-alpha). The relevance of such interaction is however unclear in vivo. Probably not expressed in wild-type flies. In males lacking the Y chromosome, it is testis-specific and constitutes the main component of star-shaped crystals.

Functionally, unknown. In males lacking the Y chromosome, its strong overexpression leads to the appearance of proteinaceous star-shaped crystals in the primary spermatocytes causing meiotic drive, possibly by interfering with normal casein kinase 2 activity. The chain is Stellate protein CG33237 (Ste:CG33237) from Drosophila melanogaster (Fruit fly).